The primary structure comprises 1054 residues: MKQPNINLAACILWLLSIITAVAAETDAERNTGVFARNSAARNRSPGNEPPGYATRFKGVTWDVANWRLTTTELDQGHYQSRGSVANGYLGINVAAVGPFFELDIPVSGDVINGWPVFSRRQTFATISDFYSFQRSINATNFPWLDKYGGDLISGVPHWSGLILDLGDGNFLDATVKNSTISNFSSTLDMKGGILTWQYTWSPEKHNGTYDIFYQLVAHKLHVNQALVRLEITPSRDGNVSVVNVIDGYSAVRTDFKGSGQDGSAIYTSVNPEGISNVTAFIYAELSGTEGVDLSSSSLVDDKPYIHMNGSTIAQSVNVKLRAGQTTKIDKFVGAASTDGFKNPRQAAKEASARALRTGYEESLKSHIAEWATVFPSDSTEDYTIPGKKWLPLDHHIIEASIVSVVNPYYLLQSTVSNNALAAVKNAPLNRGSIAVGGLTSDSYGGLVFWDADIWMQPGLVVAFPEASQIFSNYRVDKYGQALRNAQTQHLSSKNDTYFSPDAAVYPWTSGRFANCTATGPCFDYQYHLNGDIGMQIVNNWVTTGDTEHFKSKLFPVYNSIATFFSQLVEKNGTKWTVTNMTDPDEYANLVDGGGYTMPLIATTLKYANQFREMFGIGANQTWNEIAQNVQVSRDQASQITLEYTTMNGSTQVKQADIVLNTFPLHYTEDYTHDNALRDLDYYAAKQSPNGPAMTYAIFSIVANEVSPSGCSAYTYGQYSFSPYVRAPFFQFSEQLMDDWSINGGTHPAYPFLTGNGGANQVAVFGYLGLRLIPDGILHLNPNLPPQIPHLRYRTFYWHGWPLEASANYTQTTIQRATNRRPLTSADPKYASAPITVHVGPANNITVYSLPPSGQLVIPNRQIGSISTVPGNLVQCQPVFSPNEFAPGQFPISAVDGAASTKWQPRRASSTSSLTVTLPDHASSATISGFAFDWAQAPPVSAKVVLHDEPLHPVTDPENGDASGSSPTTPASSVTVWESAKVPLSDPYDPIKIDLNMIMSYKGNTTNVTLPSTVPATKFATLLIRGNQALGPVEVRAGNGTGATVAEWSIVRSS.

The signal sequence occupies residues 1-24 (MKQPNINLAACILWLLSIITAVAA). Residues asparagine 138, asparagine 178, asparagine 183, asparagine 207, asparagine 239, asparagine 277, and asparagine 309 are each glycosylated (N-linked (GlcNAc...) asparagine). 450–451 (WD) serves as a coordination point for substrate. 4 N-linked (GlcNAc...) asparagine glycosylation sites follow: asparagine 495, asparagine 515, asparagine 572, and asparagine 580. Glutamate 586 serves as the catalytic Proton donor. Asparagine 620 and asparagine 648 each carry an N-linked (GlcNAc...) asparagine glycan. Residue 654–655 (KQ) coordinates substrate. 2 N-linked (GlcNAc...) asparagine glycosylation sites follow: asparagine 808 and asparagine 844. Positions 950–974 (PLHPVTDPENGDASGSSPTTPASSV) are disordered. Low complexity predominate over residues 962–974 (ASGSSPTTPASSV). 3 N-linked (GlcNAc...) asparagine glycosylation sites follow: asparagine 1004, asparagine 1007, and asparagine 1039.

It belongs to the glycosyl hydrolase 65 family.

The protein resides in the secreted. The protein localises to the cell wall. It carries out the reaction alpha,alpha-trehalose + H2O = alpha-D-glucose + beta-D-glucose. Its function is as follows. Cell wall acid trehalase that catalyzes hydrolysis of the disaccharide trehalose and required for growth on trehalose as carbon source. Plays a role in virulence. The sequence is that of Cell wall acid trehalase ARB_03719 from Arthroderma benhamiae (strain ATCC MYA-4681 / CBS 112371) (Trichophyton mentagrophytes).